Here is a 181-residue protein sequence, read N- to C-terminus: ATP-dependent protease subunit HslV (181 aa).

Residue Thr-7 is part of the active site. 3 residues coordinate Na(+): Ala-166, Cys-169, and Thr-172.

Belongs to the peptidase T1B family. HslV subfamily. As to quaternary structure, a double ring-shaped homohexamer of HslV is capped on each side by a ring-shaped HslU homohexamer. The assembly of the HslU/HslV complex is dependent on binding of ATP.

It is found in the cytoplasm. The enzyme catalyses ATP-dependent cleavage of peptide bonds with broad specificity.. With respect to regulation, allosterically activated by HslU binding. Protease subunit of a proteasome-like degradation complex believed to be a general protein degrading machinery. The sequence is that of ATP-dependent protease subunit HslV from Anaeromyxobacter dehalogenans (strain 2CP-1 / ATCC BAA-258).